Here is a 218-residue protein sequence, read N- to C-terminus: dTTP/UTP pyrophosphatase (218 aa).

The active-site Proton acceptor is the D69.

This sequence belongs to the Maf family. YhdE subfamily. A divalent metal cation is required as a cofactor.

The protein resides in the cytoplasm. It carries out the reaction dTTP + H2O = dTMP + diphosphate + H(+). The catalysed reaction is UTP + H2O = UMP + diphosphate + H(+). Its function is as follows. Nucleoside triphosphate pyrophosphatase that hydrolyzes dTTP and UTP. May have a dual role in cell division arrest and in preventing the incorporation of modified nucleotides into cellular nucleic acids. In Thermomicrobium roseum (strain ATCC 27502 / DSM 5159 / P-2), this protein is dTTP/UTP pyrophosphatase.